A 704-amino-acid chain; its full sequence is Glycine--tRNA ligase beta subunit (704 aa).

The protein belongs to the class-II aminoacyl-tRNA synthetase family. In terms of assembly, tetramer of two alpha and two beta subunits.

It localises to the cytoplasm. It catalyses the reaction tRNA(Gly) + glycine + ATP = glycyl-tRNA(Gly) + AMP + diphosphate. The sequence is that of Glycine--tRNA ligase beta subunit from Rhizobium johnstonii (strain DSM 114642 / LMG 32736 / 3841) (Rhizobium leguminosarum bv. viciae).